A 90-amino-acid polypeptide reads, in one-letter code: Small ribosomal subunit protein bS16 (90 aa).

The protein belongs to the bacterial ribosomal protein bS16 family.

This is Small ribosomal subunit protein bS16 from Bacillus velezensis (strain DSM 23117 / BGSC 10A6 / LMG 26770 / FZB42) (Bacillus amyloliquefaciens subsp. plantarum).